We begin with the raw amino-acid sequence, 242 residues long: MFHRLLNKSKILACDDKSVNDYIINVKNLSFFYSKKKVIDNISFRVKFGEIITILGPNGGGKTTLIRILVGIYKNYVGLVEYAKDFTIGYLPQHFSVNSLIPMTVEYFLNSSYTNRKRKLGVGDVLKDVNIEKILDRQMSEISYGELQLVLLARCLMLNPDLIILDEPVSCMDINAKNSFYKLINKLISIYNLSVIMTSHDLHFVMSNSYRVICINKSVYCEGSPSEIVKNEKFLKMFSSYA.

The 218-residue stretch at 24–241 (INVKNLSFFY…EKFLKMFSSY (218 aa)) folds into the ABC transporter domain. 56-63 (GPNGGGKT) is a binding site for ATP.

It belongs to the ABC transporter superfamily. Zinc importer (TC 3.A.1.15.5) family. As to quaternary structure, the complex is composed of two ATP-binding proteins (ZnuC), two transmembrane proteins (ZnuB) and a solute-binding protein (ZnuA).

It localises to the cell inner membrane. The enzyme catalyses Zn(2+)(out) + ATP(in) + H2O(in) = Zn(2+)(in) + ADP(in) + phosphate(in) + H(+)(in). Its function is as follows. Part of the ABC transporter complex ZnuABC involved in zinc import. Responsible for energy coupling to the transport system. The protein is Zinc import ATP-binding protein ZnuC of Ehrlichia canis (strain Jake).